The primary structure comprises 370 residues: Phosphoserine aminotransferase (370 aa).

Arg-42 serves as a coordination point for L-glutamate. 4 residues coordinate pyridoxal 5'-phosphate: Trp-108, Thr-158, Asp-182, and Gln-205. At Lys-206 the chain carries N6-(pyridoxal phosphate)lysine. 247–248 (NT) serves as a coordination point for pyridoxal 5'-phosphate.

This sequence belongs to the class-V pyridoxal-phosphate-dependent aminotransferase family. SerC subfamily. In terms of assembly, homodimer. Requires pyridoxal 5'-phosphate as cofactor.

It localises to the cytoplasm. It carries out the reaction O-phospho-L-serine + 2-oxoglutarate = 3-phosphooxypyruvate + L-glutamate. The catalysed reaction is 4-(phosphooxy)-L-threonine + 2-oxoglutarate = (R)-3-hydroxy-2-oxo-4-phosphooxybutanoate + L-glutamate. It participates in amino-acid biosynthesis; L-serine biosynthesis; L-serine from 3-phospho-D-glycerate: step 2/3. It functions in the pathway cofactor biosynthesis; pyridoxine 5'-phosphate biosynthesis; pyridoxine 5'-phosphate from D-erythrose 4-phosphate: step 3/5. Catalyzes the reversible conversion of 3-phosphohydroxypyruvate to phosphoserine and of 3-hydroxy-2-oxo-4-phosphonooxybutanoate to phosphohydroxythreonine. This chain is Phosphoserine aminotransferase, found in Albidiferax ferrireducens (strain ATCC BAA-621 / DSM 15236 / T118) (Rhodoferax ferrireducens).